We begin with the raw amino-acid sequence, 201 residues long: LexA repressor 1 (201 aa).

Positions Leu-27–Gln-47 form a DNA-binding region, H-T-H motif. Active-site for autocatalytic cleavage activity residues include Ser-122 and Lys-159.

Belongs to the peptidase S24 family. Homodimer.

It carries out the reaction Hydrolysis of Ala-|-Gly bond in repressor LexA.. In terms of biological role, represses a number of genes involved in the response to DNA damage (SOS response), including recA and lexA. In the presence of single-stranded DNA, RecA interacts with LexA causing an autocatalytic cleavage which disrupts the DNA-binding part of LexA, leading to derepression of the SOS regulon and eventually DNA repair. The chain is LexA repressor 1 from Xanthomonas campestris pv. campestris (strain ATCC 33913 / DSM 3586 / NCPPB 528 / LMG 568 / P 25).